The sequence spans 380 residues: Ceramide synthase 2 (380 aa).

The Lumenal portion of the chain corresponds to 1–40 (MLQTLHDYFWWERLWLPVNLTWADLEDRDGRVYAKASDLY). The N-linked (GlcNAc...) asparagine glycan is linked to N19. Residues 41–61 (ITLPLALLFLIIRYFFELYVA) traverse the membrane as a helical segment. Residues 67 to 128 (LLNVKEKTRL…RRRRNQDRPS (62 aa)) are homeobox-like. Residues 131 to 332 (KKFREASWRF…ILRMAHKFIT (202 aa)) enclose the TLC domain. 4 consecutive transmembrane segments (helical) span residues 140 to 160 (FTFY…KPWF), 181 to 201 (WYYM…ASDV), 209 to 229 (QIIH…ANYV), and 264 to 284 (IFIV…PFWI). A Last loop motif motif is present at residues 291–300 (YPLELYPAFF). A helical transmembrane segment spans residues 304 to 324 (FFNFMMGVLQLLHIFWAYLIL). At 325–380 (RMAHKFITGKVVEDERSDREETESSEGEEAAAGGGAKNRPLANGHPILNNNHRKND) the chain is on the cytoplasmic side. Residues 338 to 380 (DERSDREETESSEGEEAAAGGGAKNRPLANGHPILNNNHRKND) form a disordered region. S341 carries the phosphoserine modification. Positions 344–353 (EETESSEGEE) are enriched in acidic residues. T346 carries the post-translational modification Phosphothreonine. Phosphoserine occurs at positions 348 and 349.

Interacts with ATP6V0C, ASGR1, ASGR2 and SLC22A1/OCT1. Interacts with ELOV1, HSD17B12 and TECR. Interacts with NDUFS2. Post-translationally, acetylated. Deacetylation by SIRT3 increases enzyme activity and promotes mitochondrial ceramide accumulation. Phosphorylated at the C-terminus by CK2, leading to increase the ceramide synthase activity.

The protein resides in the endoplasmic reticulum membrane. It carries out the reaction a very long-chain fatty acyl-CoA + a sphingoid base = an N-(very-long-chain fatty acyl)-sphingoid base + CoA + H(+). The enzyme catalyses docosanoyl-CoA + sphinganine = N-docosanoylsphinganine + CoA + H(+). It catalyses the reaction tetracosanoyl-CoA + sphinganine = N-tetracosanoylsphinganine + CoA + H(+). The catalysed reaction is hexacosanoyl-CoA + sphinganine = N-hexacosanoylsphinganine + CoA + H(+). It carries out the reaction (15Z)-tetracosenoyl-CoA + sphinganine = N-(15Z-tetracosenoyl)-sphinganine + CoA + H(+). The enzyme catalyses 2-hydroxytetracosanoyl-CoA + sphinganine = N-(2-hydroxytetracosanoyl)-sphinganine + CoA + H(+). It catalyses the reaction 2-hydroxydocosanoyl-CoA + sphinganine = N-(2-hydroxydocosanoyl)-sphinganine + CoA + H(+). The catalysed reaction is 2-hydroxytetracosenoyl-CoA + sphinganine = N-(2-hydroxytetracosenoyl)-sphinganine + CoA + H(+). It carries out the reaction tetracosenoyl-CoA + sphinganine = an N-tetracosenoylsphinganine + CoA + H(+). The enzyme catalyses hexacosenoyl-CoA + sphinganine = N-hexacosenoylsphinganine + CoA + H(+). It catalyses the reaction tetracosanoyl-CoA + sphing-4-enine = N-tetracosanoyl-sphing-4-enine + CoA + H(+). The catalysed reaction is tetracosenoyl-CoA + sphing-4-enine = N-(tetracosenoyl)-sphing-4-enine + CoA + H(+). It carries out the reaction heptadecasphing-4-enine + tetracosanoyl-CoA = N-tetracosanoyl-heptadecasphing-4-enine + CoA + H(+). The enzyme catalyses a fatty acyl-CoA + sphing-4-enine = an N-acylsphing-4-enine + CoA + H(+). It catalyses the reaction sphing-4-enine + hexadecanoyl-CoA = N-hexadecanoylsphing-4-enine + CoA + H(+). The catalysed reaction is sphing-4-enine + octadecanoyl-CoA = N-octadecanoylsphing-4-enine + CoA + H(+). It carries out the reaction eicosanoyl-CoA + sphing-4-enine = N-eicosanoyl-sphing-4-enine + CoA + H(+). The enzyme catalyses sphinganine + hexadecanoyl-CoA = N-hexadecanoylsphinganine + CoA + H(+). It catalyses the reaction sphinganine + octadecanoyl-CoA = N-(octadecanoyl)-sphinganine + CoA + H(+). The catalysed reaction is sphinganine + (9Z)-octadecenoyl-CoA = N-(9Z-octadecenoyl)-sphinganine + CoA + H(+). It carries out the reaction eicosanoyl-CoA + sphinganine = N-eicosanoylsphinganine + CoA + H(+). It functions in the pathway lipid metabolism; sphingolipid metabolism. Ceramide synthase activity is inhibited by sphingosine-1-phosphate. Ceramide synthase that catalyzes the transfer of the acyl chain from acyl-CoA to a sphingoid base, with high selectivity toward very-long-chain fatty acyl-CoA (chain length C22-C27). N-acylates sphinganine and sphingosine bases to form dihydroceramides and ceramides in de novo synthesis and salvage pathways, respectively. Plays a non-redundant role in the synthesis of ceramides with very-long-chain fatty acids in kidney, liver and brain. Regulates the abundance of myelin-specific sphingolipids galactosylceramide and sulfatide that affects myelin sheath architecture and motor neuron functions. The chain is Ceramide synthase 2 from Bos taurus (Bovine).